Consider the following 208-residue polypeptide: Pyridoxine/pyridoxamine 5'-phosphate oxidase (208 aa).

FMN contacts are provided by residues 53 to 58 (RTVLLK), 68 to 69 (YS), K75, and Q100. K58 serves as a coordination point for substrate. The substrate site is built by Y118, R122, and S126. FMN-binding positions include 135 to 136 (QS) and W180. A substrate-binding site is contributed by 186–188 (RLH). Residue R190 coordinates FMN.

Belongs to the pyridoxamine 5'-phosphate oxidase family. As to quaternary structure, homodimer. FMN serves as cofactor.

The catalysed reaction is pyridoxamine 5'-phosphate + O2 + H2O = pyridoxal 5'-phosphate + H2O2 + NH4(+). The enzyme catalyses pyridoxine 5'-phosphate + O2 = pyridoxal 5'-phosphate + H2O2. Its pathway is cofactor metabolism; pyridoxal 5'-phosphate salvage; pyridoxal 5'-phosphate from pyridoxamine 5'-phosphate: step 1/1. It functions in the pathway cofactor metabolism; pyridoxal 5'-phosphate salvage; pyridoxal 5'-phosphate from pyridoxine 5'-phosphate: step 1/1. Functionally, catalyzes the oxidation of either pyridoxine 5'-phosphate (PNP) or pyridoxamine 5'-phosphate (PMP) into pyridoxal 5'-phosphate (PLP). The chain is Pyridoxine/pyridoxamine 5'-phosphate oxidase from Xylella fastidiosa (strain 9a5c).